The sequence spans 185 residues: Intraflagellar transport protein 22 homolog (185 aa).

Residues glycine 10–threonine 17, aspartate 63–aspartate 67, and histidine 123–glycine 126 contribute to the GTP site. Serine 137 is subject to Phosphoserine.

Belongs to the small GTPase superfamily. Rab family. Component of the IFT complex B, at least composed of IFT20, IFT22, IFT25, IFT27, IFT46, IFT52, TRAF3IP1/IFT54, IFT57, IFT74, IFT80, IFT81, and IFT88. Interacts with IFT88. Interacts with CFAP61.

Its subcellular location is the cell projection. The protein localises to the cilium. Its function is as follows. Small GTPase-like component of the intraflagellar transport (IFT) complex B. In Homo sapiens (Human), this protein is Intraflagellar transport protein 22 homolog (IFT22).